A 671-amino-acid polypeptide reads, in one-letter code: DNA ligase (671 aa).

Residues 32 to 36, 81 to 82, and glutamate 113 contribute to the NAD(+) site; these read DAEYD and SL. Lysine 115 (N6-AMP-lysine intermediate) is an active-site residue. Arginine 136, glutamate 173, lysine 290, and lysine 314 together coordinate NAD(+). Positions 408, 411, 426, and 432 each coordinate Zn(2+). One can recognise a BRCT domain in the interval 593 to 671; sequence EIDSPFAGKT…EAEMLRLFGE (79 aa).

It belongs to the NAD-dependent DNA ligase family. LigA subfamily. Mg(2+) serves as cofactor. Requires Mn(2+) as cofactor.

It catalyses the reaction NAD(+) + (deoxyribonucleotide)n-3'-hydroxyl + 5'-phospho-(deoxyribonucleotide)m = (deoxyribonucleotide)n+m + AMP + beta-nicotinamide D-nucleotide.. Functionally, DNA ligase that catalyzes the formation of phosphodiester linkages between 5'-phosphoryl and 3'-hydroxyl groups in double-stranded DNA using NAD as a coenzyme and as the energy source for the reaction. It is essential for DNA replication and repair of damaged DNA. This chain is DNA ligase, found in Enterobacter sp. (strain 638).